A 149-amino-acid chain; its full sequence is uncharacterized protein (149 aa).

The next 3 membrane-spanning stretches (helical) occupy residues 39 to 61, 82 to 104, and 119 to 141; these read VPLGTLVFLFVVIITLIPLLIIG, VFGYSLIVSDIVGFAIVFFGAIL, and WMMMLGSLIALGTTANLVSSIYL.

It to M.pneumoniae MPN_090.

The protein localises to the cell membrane. This is an uncharacterized protein from Mycoplasma pneumoniae (strain ATCC 29342 / M129 / Subtype 1) (Mycoplasmoides pneumoniae).